Consider the following 250-residue polypeptide: 5'-nucleotidase SurE (250 aa).

Residues aspartate 8, aspartate 9, serine 39, and asparagine 91 each contribute to the a divalent metal cation site.

Belongs to the SurE nucleotidase family. A divalent metal cation is required as a cofactor.

Its subcellular location is the cytoplasm. It catalyses the reaction a ribonucleoside 5'-phosphate + H2O = a ribonucleoside + phosphate. Nucleotidase that shows phosphatase activity on nucleoside 5'-monophosphates. The polypeptide is 5'-nucleotidase SurE (Leptospira interrogans serogroup Icterohaemorrhagiae serovar copenhageni (strain Fiocruz L1-130)).